The primary structure comprises 281 residues: Energy-coupling factor transporter ATP-binding protein EcfA1 (281 aa).

Residues 6-245 (IKSEDLVFKY…VEKIKSIGLD (240 aa)) form the ABC transporter domain. Position 44 to 51 (44 to 51 (GHNGSGKS)) interacts with ATP.

Belongs to the ABC transporter superfamily. Energy-coupling factor EcfA family. In terms of assembly, forms a stable energy-coupling factor (ECF) transporter complex composed of 2 membrane-embedded substrate-binding proteins (S component), 2 ATP-binding proteins (A component) and 2 transmembrane proteins (T component).

The protein resides in the cell membrane. ATP-binding (A) component of a common energy-coupling factor (ECF) ABC-transporter complex. Unlike classic ABC transporters this ECF transporter provides the energy necessary to transport a number of different substrates. The polypeptide is Energy-coupling factor transporter ATP-binding protein EcfA1 (Clostridium perfringens (strain ATCC 13124 / DSM 756 / JCM 1290 / NCIMB 6125 / NCTC 8237 / Type A)).